Reading from the N-terminus, the 876-residue chain is MAIASQYNAKKVEDKWYDYWMKNNYFHSEVDDREPYTIVIPPPNVTGVLHMGHMLNNTIQDVLVRRARLKGLNACWVPGTDHASIATEAKVVAKLKAEGIDKNDLTREEFLQHAWEWTHKHGGIILQQLKHLGASCDWERTKFTMDDDMSASVIKVFVDLYEKGLVYRGYRMVNWDPQAKTTLSDEEVNYEERNGKLYHLKYKIDGTEDYLTIATTRPETILGDTAICINPNDERFTHLKGKKAIVPICNRTIPIIEDEYVDMEFGTGCLKVTPAHDENDKNLGDKHDLDVIDIFNDDATLNNYGLHYEGKDRFVVRAEIVEELELYGFLDKVEDHINKVGTSERTGAVIEPKLSDQWFLKMKEMAQPAIKAVLGDDINLVPEKFLNTYRHWMENVRDWNISRQLWWGHQIPAYFYGKGKNDFVVAETLNQAVLKAREVTGNAELQASDLTQDKDALDTWFSSWLWPMSVFNGILEPENKEIEYYYPTNDLVTAPEILFFWVARMIMAGYEYRGERPFKNVYLTGIVRDKQRRKMSKSLGNSPDPLGLIEQYGADGVRVGMLLSSPAGNDLMFDEDLCKQGSGFTNKIWNAFRLVKGWEISEKIEQPETAKMAINWYTARFQKTIREIEDHYSKYRISDALMSTYKLIWDDYCSWFLEMVKPGYGEPMDAKTYKAIIAILEENLKILHPFMPFVTEEIWQEITERTPEEALIIAKWPVEKEFDETIIKEFSHAAEVIAGVRKIRKDKNISFKNEIDFSVLNNENTSKTFDGVISKMGNISNLEYVTGSVDGALSFRVRSNEYFIPIAGAIDVEAEKEKIQEELNYTEGFLKSVDKKLSNERFVNNAPEKVVAIEKAKKADAEAKIEALKASLKSLS.

A 'HIGH' region motif is present at residues 43 to 53 (PNVTGVLHMGH). A 'KMSKS' region motif is present at residues 534 to 538 (KMSKS). An ATP-binding site is contributed by lysine 537. Residues 847 to 876 (PEKVVAIEKAKKADAEAKIEALKASLKSLS) adopt a coiled-coil conformation.

The protein belongs to the class-I aminoacyl-tRNA synthetase family. ValS type 1 subfamily. As to quaternary structure, monomer.

Its subcellular location is the cytoplasm. The enzyme catalyses tRNA(Val) + L-valine + ATP = L-valyl-tRNA(Val) + AMP + diphosphate. Its function is as follows. Catalyzes the attachment of valine to tRNA(Val). As ValRS can inadvertently accommodate and process structurally similar amino acids such as threonine, to avoid such errors, it has a 'posttransfer' editing activity that hydrolyzes mischarged Thr-tRNA(Val) in a tRNA-dependent manner. The protein is Valine--tRNA ligase of Christiangramia forsetii (strain DSM 17595 / CGMCC 1.15422 / KT0803) (Gramella forsetii).